A 330-amino-acid chain; its full sequence is MNIYYEQDADLAVLQNKNIAILGYGSQGHAHALNLKDSGMNVCVGLKTDSASCAKAREAGLKVDTVAEAVKWADIVMILLPDQTQKSVYDNEIAPNLKSGATLAFGHGFNIHYKQIVPPADVNVIMIAPKSPGHLVRRTYTEGNGVPCLIAVHQDATGDAKAIALAWAKGIGGTKAGVIETSFKDETETDLFGEQAVLCGGSAELIKAGFETLTEAGYPAELAYFECMHELKLIVDLYYEGGLSRMNYSVSDTAEYGGMTRGPRVVTSAAKAEMKKILEEIQDGRFAKEFIDECNSGYKKMNELRESNRNHPIEVVGAKLRGMMSWLKKK.

In terms of domain architecture, KARI N-terminal Rossmann spans 1 to 181 (MNIYYEQDAD…GGTKAGVIET (181 aa)). NADP(+) contacts are provided by residues 24 to 27 (YGSQ), Lys-47, Ser-50, Ser-52, and 82 to 85 (DQTQ). Residue His-107 is part of the active site. Residue Gly-133 participates in NADP(+) binding. Residues 182-327 (SFKDETETDL…AKLRGMMSWL (146 aa)) form the KARI C-terminal knotted domain. Residues Asp-190, Glu-194, Glu-226, and Glu-230 each coordinate Mg(2+). A substrate-binding site is contributed by Ser-251.

Belongs to the ketol-acid reductoisomerase family. Requires Mg(2+) as cofactor.

The enzyme catalyses (2R)-2,3-dihydroxy-3-methylbutanoate + NADP(+) = (2S)-2-acetolactate + NADPH + H(+). It carries out the reaction (2R,3R)-2,3-dihydroxy-3-methylpentanoate + NADP(+) = (S)-2-ethyl-2-hydroxy-3-oxobutanoate + NADPH + H(+). The protein operates within amino-acid biosynthesis; L-isoleucine biosynthesis; L-isoleucine from 2-oxobutanoate: step 2/4. Its pathway is amino-acid biosynthesis; L-valine biosynthesis; L-valine from pyruvate: step 2/4. Involved in the biosynthesis of branched-chain amino acids (BCAA). Catalyzes an alkyl-migration followed by a ketol-acid reduction of (S)-2-acetolactate (S2AL) to yield (R)-2,3-dihydroxy-isovalerate. In the isomerase reaction, S2AL is rearranged via a Mg-dependent methyl migration to produce 3-hydroxy-3-methyl-2-ketobutyrate (HMKB). In the reductase reaction, this 2-ketoacid undergoes a metal-dependent reduction by NADPH to yield (R)-2,3-dihydroxy-isovalerate. This Chlorobaculum tepidum (strain ATCC 49652 / DSM 12025 / NBRC 103806 / TLS) (Chlorobium tepidum) protein is Ketol-acid reductoisomerase (NADP(+)).